An 855-amino-acid chain; its full sequence is Inactive rhomboid protein 1 (855 aa).

The interval 1–36 (MSEARRDSTSSLQRKKPPWLKLDIPSAVPPTAEEPS) is disordered. The Cytoplasmic segment spans residues 1 to 411 (MSEARRDSTS…HRPFFTYWLT (411 aa)). Phosphoserine occurs at positions 76 and 176. Phosphothreonine is present on residues threonine 180 and threonine 183. Serine 390 is subject to Phosphoserine. A helical transmembrane segment spans residues 412–432 (FVHSLVTILAVCIYGIAPVGF). Residues 433 to 655 (SQHETVDSVL…NPEVPDQFYR (223 aa)) are Lumenal-facing. Asparagine 583 carries an N-linked (GlcNAc...) asparagine glycan. The helical transmembrane segment at 656–676 (LWLSLFLHAGILHCLVSICFQ) threads the bilayer. Residues 677–691 (MTVLRDLEKLAGWHR) are Cytoplasmic-facing. A helical membrane pass occupies residues 692 to 712 (IAIIYLLSGVTGNLASAIFLP). At 713-714 (YR) the chain is on the lumenal side. The helical transmembrane segment at 715–735 (AEVGPAGSQFGILACLFVELF) threads the bilayer. Residues 736–746 (QSWQILARPWR) lie on the Cytoplasmic side of the membrane. Residues 747–767 (AFFKLLAVVLFLFTFGLLPWI) traverse the membrane as a helical segment. Over 768–772 (DNFAH) the chain is Lumenal. A helical membrane pass occupies residues 773 to 793 (ISGFISGLFLSFAFLPYISFG). The Cytoplasmic portion of the chain corresponds to 794–803 (KFDLYRKRCQ). The chain crosses the membrane as a helical span at residues 804 to 824 (IIIFQVVFLGLLAGLVVLFYF). Residues 825–855 (YPVRCEWCEFLTCIPFTDKFCEKYELDAQLH) lie on the Lumenal side of the membrane.

The protein belongs to the peptidase S54 family. Homodimer, or homooligomer. Interacts with TGFA and HBEGF. Interacts with EGF; may retain EGF in the endoplasmic reticulum and regulates its degradation through the endoplasmic reticulum-associated degradation (ERAD). Interacts (via cytoplasmic N-terminus) with FRMD8/iTAP; this interaction leads to mutual protein stabilization. Interacts with ADAM17/TACE.

It localises to the endoplasmic reticulum membrane. It is found in the golgi apparatus membrane. In terms of biological role, regulates ADAM17 protease, a sheddase of the epidermal growth factor (EGF) receptor ligands and TNF, thereby plays a role in sleep, cell survival, proliferation, migration and inflammation. Does not exhibit any protease activity on its own. This is Inactive rhomboid protein 1 (RHBDF1) from Papio anubis (Olive baboon).